The primary structure comprises 231 residues: 2-C-methyl-D-erythritol 4-phosphate cytidylyltransferase (231 aa).

It belongs to the IspD/TarI cytidylyltransferase family. IspD subfamily.

It catalyses the reaction 2-C-methyl-D-erythritol 4-phosphate + CTP + H(+) = 4-CDP-2-C-methyl-D-erythritol + diphosphate. It participates in isoprenoid biosynthesis; isopentenyl diphosphate biosynthesis via DXP pathway; isopentenyl diphosphate from 1-deoxy-D-xylulose 5-phosphate: step 2/6. Its function is as follows. Catalyzes the formation of 4-diphosphocytidyl-2-C-methyl-D-erythritol from CTP and 2-C-methyl-D-erythritol 4-phosphate (MEP). The protein is 2-C-methyl-D-erythritol 4-phosphate cytidylyltransferase of Mycobacterium bovis (strain BCG / Pasteur 1173P2).